We begin with the raw amino-acid sequence, 299 residues long: Tetrahydromethanopterin S-methyltransferase subunit E (299 aa).

A run of 6 helical transmembrane segments spans residues 57–79 (AISGEPVSYGLYVAVAGTIAWAL), 95–115 (GVAAVVHGAYSVSAFLGRTVG), 133–153 (IGPIVGHGFIAVFTMTLAAYL), 158–178 (LGNPFPLPLVALIFGITVGAI), 237–257 (GLCFGLIIFLDGWRSILGNII), and 262–282 (VTKTSIALLVGLLVVAVAAGI).

Belongs to the MtrE family. The complex is composed of 8 subunits; MtrA, MtrB, MtrC, MtrD, MtrE, MtrF, MtrG and MtrH.

The protein resides in the cell membrane. The enzyme catalyses 5-methyl-5,6,7,8-tetrahydromethanopterin + coenzyme M + 2 Na(+)(in) = 5,6,7,8-tetrahydromethanopterin + methyl-coenzyme M + 2 Na(+)(out). It functions in the pathway one-carbon metabolism; methanogenesis from CO(2); methyl-coenzyme M from 5,10-methylene-5,6,7,8-tetrahydromethanopterin: step 2/2. Functionally, part of a complex that catalyzes the formation of methyl-coenzyme M and tetrahydromethanopterin from coenzyme M and methyl-tetrahydromethanopterin. This is an energy-conserving, sodium-ion translocating step. The chain is Tetrahydromethanopterin S-methyltransferase subunit E from Methanococcus maripaludis (strain C5 / ATCC BAA-1333).